Reading from the N-terminus, the 224-residue chain is Peptidyl-tRNA hydrolase (224 aa).

A tRNA-binding site is contributed by Tyr-27. His-32 serves as the catalytic Proton acceptor. TRNA-binding residues include Tyr-78, Asn-80, and Asn-126. A compositionally biased stretch (low complexity) spans 203–215; it reads LSGPSSDLDGSNP. The disordered stretch occupies residues 203–224; sequence LSGPSSDLDGSNPAPGHGEASS.

The protein belongs to the PTH family. Monomer.

The protein localises to the cytoplasm. The enzyme catalyses an N-acyl-L-alpha-aminoacyl-tRNA + H2O = an N-acyl-L-amino acid + a tRNA + H(+). In terms of biological role, hydrolyzes ribosome-free peptidyl-tRNAs (with 1 or more amino acids incorporated), which drop off the ribosome during protein synthesis, or as a result of ribosome stalling. Functionally, catalyzes the release of premature peptidyl moieties from peptidyl-tRNA molecules trapped in stalled 50S ribosomal subunits, and thus maintains levels of free tRNAs and 50S ribosomes. This is Peptidyl-tRNA hydrolase from Synechococcus sp. (strain JA-2-3B'a(2-13)) (Cyanobacteria bacterium Yellowstone B-Prime).